Reading from the N-terminus, the 879-residue chain is Metabotropic glutamate receptor 3 (879 aa).

The signal sequence occupies residues 1–22 (MKMLTRLQVLMLALFSKGFLVS). Residues 23-576 (LGDHNFMRRE…EDYIRWEDAW (554 aa)) lie on the Extracellular side of the membrane. Cysteines 57 and 99 form a disulfide. Residues Ser-151 and 172-174 (AST) contribute to the L-glutamate site. Asn-209 is a glycosylation site (N-linked (GlcNAc...) asparagine). L-glutamate is bound at residue Tyr-222. 7 disulfides stabilise this stretch: Cys-240/Cys-527, Cys-361/Cys-373, Cys-412/Cys-419, Cys-509/Cys-528, Cys-513/Cys-531, Cys-534/Cys-546, and Cys-549/Cys-562. Residue Asn-292 is glycosylated (N-linked (GlcNAc...) asparagine). Asp-301 is an L-glutamate binding site. Residue Lys-389 participates in L-glutamate binding. N-linked (GlcNAc...) asparagine glycans are attached at residues Asn-414 and Asn-439. The helical transmembrane segment at 577-599 (AIGPVTIACLGFMCTCIVITVFI) threads the bilayer. Over 600-613 (KHNNTPLVKASGRE) the chain is Cytoplasmic. The chain crosses the membrane as a helical span at residues 614–634 (LCYILLFGVSLSYCMTFFFIA). Topologically, residues 635–645 (KPSPVICALRR) are extracellular. The helical transmembrane segment at 646 to 664 (LGLGTSFAICYSALLTKTN) threads the bilayer. Over 665–688 (CIARIFDGVKNGAQRPKFISPSSQ) the chain is Cytoplasmic. A helical membrane pass occupies residues 689-709 (VFICLGLILVQIVMVSVWLIL). The Extracellular portion of the chain corresponds to 710 to 734 (ETPGTRRYTLPEKRETVILKCNVKD). The helical transmembrane segment at 735 to 756 (SSMLISLTYDVVLVILCTVYAF) threads the bilayer. The Cytoplasmic portion of the chain corresponds to 757-769 (KTRKCPENFNEAK). The helical transmembrane segment at 770 to 792 (FIGFTMYTTCIIWLAFLPIFYVT) threads the bilayer. At 793–802 (SSDYRVQTTT) the chain is on the extracellular side. Residues 803–828 (MCISVSLSGFVVLGCLFAPKVHIVLF) traverse the membrane as a helical segment. Residues 829–879 (QPQKNVVTHRLHLNRFSVSGTATTYSQSSASTYVPTVCNGREVLDSTTSSL) lie on the Cytoplasmic side of the membrane.

It belongs to the G-protein coupled receptor 3 family. Interacts with TAMALIN.

Its subcellular location is the cell membrane. Its function is as follows. G-protein coupled receptor for glutamate. Ligand binding causes a conformation change that triggers signaling via guanine nucleotide-binding proteins (G proteins) and modulates the activity of down-stream effectors. Signaling inhibits adenylate cyclase activity. The chain is Metabotropic glutamate receptor 3 (Grm3) from Mus musculus (Mouse).